A 613-amino-acid chain; its full sequence is Kelch-like protein 21 (613 aa).

Residues 38–105 form the BTB domain; sequence FDVTLCAEGK…CYTGRVTVTH (68 aa). In terms of domain architecture, BACK spans 140–242; sequence CLEIQDFAEA…RRFYLLAHVE (103 aa). 6 Kelch repeats span residues 289–337, 338–384, 386–424, 426–472, 474–514, and 515–562; these read ILVV…ALGN, DIYV…VLKG, LYVV…ACRG, LYAI…TLNG, IYFV…ALGG, and RLYV…SIFR.

Component of the BCR(KLHL21) E3 ubiquitin ligase complex, at least composed of cul3, klhl21 and rbx1.

Its subcellular location is the cytoplasm. It is found in the cytoskeleton. It localises to the spindle. It functions in the pathway protein modification; protein ubiquitination. Substrate-specific adapter of BCR (BTB-CUL3-RBX1) E3 ubiquitin-protein ligase complex required for efficient chromosome alignment and cytokinesis. The BCR(KLHL21) E3 ubiquitin ligase complex regulates localization of the chromosomal passenger complex (CPC) from chromosomes to the spindle midzone in anaphase and mediates the ubiquitination of AURKB. In Danio rerio (Zebrafish), this protein is Kelch-like protein 21 (klhl21).